We begin with the raw amino-acid sequence, 465 residues long: UDP-N-acetylmuramate--L-alanine ligase (465 aa).

G125–T131 contacts ATP.

The protein belongs to the MurCDEF family.

The protein resides in the cytoplasm. It carries out the reaction UDP-N-acetyl-alpha-D-muramate + L-alanine + ATP = UDP-N-acetyl-alpha-D-muramoyl-L-alanine + ADP + phosphate + H(+). It participates in cell wall biogenesis; peptidoglycan biosynthesis. Cell wall formation. In Deinococcus geothermalis (strain DSM 11300 / CIP 105573 / AG-3a), this protein is UDP-N-acetylmuramate--L-alanine ligase.